We begin with the raw amino-acid sequence, 241 residues long: Biosynthetic peptidoglycan transglycosylase (241 aa).

The helical transmembrane segment at 18–38 (GVIGIIALWMAGILIFAFLPV) threads the bilayer.

It belongs to the glycosyltransferase 51 family.

The protein localises to the cell inner membrane. It carries out the reaction [GlcNAc-(1-&gt;4)-Mur2Ac(oyl-L-Ala-gamma-D-Glu-L-Lys-D-Ala-D-Ala)](n)-di-trans,octa-cis-undecaprenyl diphosphate + beta-D-GlcNAc-(1-&gt;4)-Mur2Ac(oyl-L-Ala-gamma-D-Glu-L-Lys-D-Ala-D-Ala)-di-trans,octa-cis-undecaprenyl diphosphate = [GlcNAc-(1-&gt;4)-Mur2Ac(oyl-L-Ala-gamma-D-Glu-L-Lys-D-Ala-D-Ala)](n+1)-di-trans,octa-cis-undecaprenyl diphosphate + di-trans,octa-cis-undecaprenyl diphosphate + H(+). It participates in cell wall biogenesis; peptidoglycan biosynthesis. Functionally, peptidoglycan polymerase that catalyzes glycan chain elongation from lipid-linked precursors. The polypeptide is Biosynthetic peptidoglycan transglycosylase (Yersinia pseudotuberculosis serotype IB (strain PB1/+)).